Consider the following 716-residue polypeptide: ATP-dependent DNA helicase DinG (716 aa).

Positions 1–114 (MALTAALKAQ…PDLKFTAAFG (114 aa)) are HD1 domain N-terminus. Residues 17–294 (ALQEQIPDFI…TCMEQFRPKT (278 aa)) form the Helicase ATP-binding domain. Positions 26, 31, 60, and 61 each coordinate ATP. The [4Fe-4S] domain stretch occupies residues 115–216 (RGRYVCPRNL…FFVARREIQE (102 aa)). C120, C194, C199, and C205 together coordinate [4Fe-4S] cluster. Residues 217–261 (AEVVVANHALVMAAMESEAVLPDPKNLLLVLDEGHHLPDVARDAL) are HD1 domain middle. Residues 248 to 251 (DEGH) carry the DEAH box motif. The arch domain stretch occupies residues 262–438 (EMSAEITAPW…LHLWFHCVGI (177 aa)). An HD1 domain middle region spans residues 439–491 (RVSDQLERLLWRSIPHIIVTSATLRSLNSFSRLQEMSGLKEKAGDRFVALDSP). The HD2 domain stretch occupies residues 492–716 (FNHCEQGKIV…KTKSPRRRRR (225 aa)). Residues D599, R656, and R659 each coordinate ATP.

This sequence belongs to the helicase family. DinG subfamily. Type 1 sub-subfamily. Monomer in solution. Requires [4Fe-4S] cluster as cofactor. Mg(2+) is required as a cofactor.

The catalysed reaction is Couples ATP hydrolysis with the unwinding of duplex DNA at the replication fork by translocating in the 5'-3' direction. This creates two antiparallel DNA single strands (ssDNA). The leading ssDNA polymer is the template for DNA polymerase III holoenzyme which synthesizes a continuous strand.. The enzyme catalyses ATP + H2O = ADP + phosphate + H(+). With respect to regulation, ATPase activity is 15-fold stimulated by single-stranded DNA (ssDNA). Reduction of the [4Fe-4S] cluster reversibly switches off helicase activity. Remains fully active after exposure to 100-fold excess of hydrogen peroxide, but the [4Fe-4S] cluster can be efficiently modified by nitric oxide (NO), forming the DinG-bound dinitrosyl iron complex with the concomitant inactivation of helicase activity. Helicase activity on G-quadruplex DNA is inhibited by porphyrin derivatives meso-tetra (N-methyl-4-pyridyl) porphine tetra tosylate (T4) and N-methyl mesoporphyrin IX (NMM). Helicase activity on forked duplexes is not inhibited by T4 or NMM. G-quadruplex ligands such as Pyridostatin, PhenDC3, BRACO-19 and Netropsin can alter recognition and unwinding of G-quadruplex DNAs; the effect is both ligand- and G-quadruplex DNA-specific. Its function is as follows. DNA-dependent ATPase and 5'-3' DNA helicase. Can also unwind DNA:RNA hybrid duplexes. Is active on D-loops, R-loops, and on forked structures. Unwinds G-quadruplex DNA in a 5'-3' direction; unwinding efficiency differs on different substrates. Does not appear to unwind replication forks or Holliday junctions. Translocates on single-stranded (ss)DNA with a 5'-3' polarity. In vitro at high concentrations also unwinds in a 3'-5' direction. May be involved in recombinational DNA repair and the resumption of replication after DNA damage. The [4Fe-4S] cluster is redox active at cellular potentials and is involved in DNA-mediated charge-transport signaling between DNA repair proteins from distinct pathways. DinG cooperates at long-range with endonuclease III, a base excision repair enzyme, using DNA charge transport to redistribute to regions of DNA damage. Binds 10-11 nucleotides of ssDNA in a positively-charged groove across the helicase domains. The sequence is that of ATP-dependent DNA helicase DinG from Escherichia coli (strain K12).